The sequence spans 64 residues: KDGYIIEHRGCKYSCFFGSSSWCNKECTLKKGSSGYCAWPACWCYGLPDSVKIFDSNNNKCSKK.

The 62-residue stretch at 1–62 folds into the LCN-type CS-alpha/beta domain; that stretch reads KDGYIIEHRG…IFDSNNNKCS (62 aa). Disulfide bonds link C11/C61, C15/C37, C23/C42, and C27/C44.

Belongs to the long (4 C-C) scorpion toxin superfamily. Sodium channel inhibitor family. Beta subfamily. In terms of tissue distribution, expressed by the venom gland.

The protein resides in the secreted. Its function is as follows. Inhibits the sodium (Nav) currents in an apparent irreversible manner. Produces small depolarization and induces repetitive firing in squid axons. Is specific for arthropods (crickets, triatomides, crabs and squids), but is non-toxic to mice. Shows antibacterial activity against both Gram-positive and Gram-negative bacteria. The chain is Toxin Tce3 from Tityus cerroazul (Scorpion).